The primary structure comprises 81 residues: EC protein III (81 aa).

Belongs to the metallothionein superfamily. Type 15 family.

Its function is as follows. Binds 5 molecules of zinc. May have a role in Zn(2+) homeostasis during embryogenesis. This is EC protein III from Triticum aestivum (Wheat).